The chain runs to 203 residues: ATP-dependent Clp protease proteolytic subunit (203 aa).

Catalysis depends on Ser107, which acts as the Nucleophile. Residue His132 is part of the active site.

The protein belongs to the peptidase S14 family. In terms of assembly, fourteen ClpP subunits assemble into 2 heptameric rings which stack back to back to give a disk-like structure with a central cavity, resembling the structure of eukaryotic proteasomes.

It localises to the cytoplasm. It catalyses the reaction Hydrolysis of proteins to small peptides in the presence of ATP and magnesium. alpha-casein is the usual test substrate. In the absence of ATP, only oligopeptides shorter than five residues are hydrolyzed (such as succinyl-Leu-Tyr-|-NHMec, and Leu-Tyr-Leu-|-Tyr-Trp, in which cleavage of the -Tyr-|-Leu- and -Tyr-|-Trp bonds also occurs).. Cleaves peptides in various proteins in a process that requires ATP hydrolysis. Has a chymotrypsin-like activity. Plays a major role in the degradation of misfolded proteins. This Shewanella halifaxensis (strain HAW-EB4) protein is ATP-dependent Clp protease proteolytic subunit.